The sequence spans 535 residues: Sucrose transport protein SUT5 (535 aa).

At 1–53 (MEEGRRGDREAKSAAGWTALSTTKTTLEEKRRLQANGSVGGDAGTSGFRRIVR) the chain is on the cytoplasmic side. The helical transmembrane segment at 54–74 (LFFACMVAGGIQYGWALQLSL) threads the bilayer. At 75-87 (LSPYSQTLGISHS) the chain is on the extracellular side. Residues 88–108 (YVSLTWICGPIAGFVVQPIVG) traverse the membrane as a helical segment. Topologically, residues 109–122 (YYSDRCTMKMGRRR) are cytoplasmic. Residues 123–143 (PFILVGCLIICISVMIIGFSA) traverse the membrane as a helical segment. Over 144–163 (DIGRHLGDTKEHCSTYTGPR) the chain is Extracellular. The chain crosses the membrane as a helical span at residues 164-184 (WSAAMVYIVGFWFLDFANNTV). The Cytoplasmic segment spans residues 185 to 203 (QGPARAMMADLSAGHHGPN). Residues 204 to 224 (VGQSIFSLWMAIGSVLGYLSG) traverse the membrane as a helical segment. Residues 225 to 249 (ANGKWHEWFPWLKTAACCDACANLK) are Extracellular-facing. The chain crosses the membrane as a helical span at residues 250-270 (GAFFTAVLLIVVSMTVTMYLA). Residues 271-302 (DEMPLDKQDVDTSGGGGCAVFVDLFKSLRNLP) lie on the Cytoplasmic side of the membrane. Residues 303 to 323 (PAMFKVLAVTAVTWLSWFPFI) traverse the membrane as a helical segment. Topologically, residues 324-354 (QYNTDWMGREIYHGEPQGTAAKADVYDAGVR) are extracellular. A helical membrane pass occupies residues 355–375 (EGAMGLLFCSVALGVTSFVIP). The Cytoplasmic segment spans residues 376–384 (KLCRRLTSK). Residues 385–405 (VVWSISNFLVFALMAVMVAVG) traverse the membrane as a helical segment. Residues 406–429 (MVSMRGYRPSLAAGLTGPDPTLKA) lie on the Extracellular side of the membrane. Residues 430 to 450 (VALVVFALIGIPQAVLFSVPW) traverse the membrane as a helical segment. The Cytoplasmic portion of the chain corresponds to 451–465 (AVASEVTAEEGGGQG). A helical membrane pass occupies residues 466–486 (LAIGVLNIAIVVPQLVIALTA). Over 487–498 (GPIDGAFNKGNT) the chain is Extracellular. Residues 499-519 (PAFGIGGAFAFICGVLALIWL) traverse the membrane as a helical segment. The Cytoplasmic segment spans residues 520 to 535 (PKTRGVSNAAVVAGGH).

This sequence belongs to the glycoside-pentoside-hexuronide (GPH) cation symporter transporter (TC 2.A.2.4) family. As to quaternary structure, homodimer.

The protein resides in the cell membrane. It participates in glycan biosynthesis; sucrose metabolism. In terms of biological role, responsible for the transport of sucrose into the cell, with the concomitant uptake of protons (symport system). May also transport other glucosides. The chain is Sucrose transport protein SUT5 (SUT5) from Oryza sativa subsp. indica (Rice).